We begin with the raw amino-acid sequence, 173 residues long: Shikimate kinase (173 aa).

10 to 15 (GSGKTT) serves as a coordination point for ATP. Thr-14 contacts Mg(2+). Residues Asp-32, Arg-56, and Gly-78 each coordinate substrate. Arg-117 lines the ATP pocket. Arg-135 is a substrate binding site.

It belongs to the shikimate kinase family. Monomer. The cofactor is Mg(2+).

Its subcellular location is the cytoplasm. The catalysed reaction is shikimate + ATP = 3-phosphoshikimate + ADP + H(+). It functions in the pathway metabolic intermediate biosynthesis; chorismate biosynthesis; chorismate from D-erythrose 4-phosphate and phosphoenolpyruvate: step 5/7. Catalyzes the specific phosphorylation of the 3-hydroxyl group of shikimic acid using ATP as a cosubstrate. In Limosilactobacillus fermentum (strain NBRC 3956 / LMG 18251) (Lactobacillus fermentum), this protein is Shikimate kinase.